A 556-amino-acid chain; its full sequence is Formate--tetrahydrofolate ligase (556 aa).

Thr65–Thr72 is an ATP binding site.

Belongs to the formate--tetrahydrofolate ligase family.

The enzyme catalyses (6S)-5,6,7,8-tetrahydrofolate + formate + ATP = (6R)-10-formyltetrahydrofolate + ADP + phosphate. It participates in one-carbon metabolism; tetrahydrofolate interconversion. This chain is Formate--tetrahydrofolate ligase, found in Clostridium acidurici (Gottschalkia acidurici).